A 766-amino-acid chain; its full sequence is Dolichyl pyrophosphate Glc1Man9GlcNAc2 alpha-1,3-glucosyltransferase (766 aa).

12 helical membrane passes run 6-26 (LVLA…PAYV), 60-80 (YPPF…FFGF), 96-116 (ILIF…AVCA), 156-176 (SIHF…LFFI), 190-210 (ILLN…FYYL), 228-248 (AISL…PFIH), 324-344 (PMGT…GLVI), 350-370 (ADFS…GYHV), 395-415 (ILIH…FTPF), 423-443 (ICVS…LMPL), 452-472 (VASW…HKWL), and 482-502 (LMAI…ALIW).

This sequence belongs to the ALG6/ALG8 glucosyltransferase family.

The protein resides in the endoplasmic reticulum membrane. The catalysed reaction is an alpha-D-Glc-(1-&gt;3)-alpha-D-Man-(1-&gt;2)-alpha-D-Man-(1-&gt;2)-alpha-D-Man-(1-&gt;3)-[alpha-D-Man-(1-&gt;2)-alpha-D-Man-(1-&gt;3)-[alpha-D-Man-(1-&gt;2)-alpha-D-Man-(1-&gt;6)]-alpha-D-Man-(1-&gt;6)]-beta-D-Man-(1-&gt;4)-beta-D-GlcNAc-(1-&gt;4)-alpha-D-GlcNAc-diphospho-di-trans,poly-cis-dolichol + a di-trans,poly-cis-dolichyl beta-D-glucosyl phosphate = an alpha-D-Glc-(1-&gt;3)-alpha-D-Glc-(1-&gt;3)-alpha-D-Man-(1-&gt;2)-alpha-D-Man-(1-&gt;2)-alpha-D-Man-(1-&gt;3)-[alpha-D-Man-(1-&gt;2)-alpha-D-Man-(1-&gt;3)-[alpha-D-Man-(1-&gt;2)-alpha-D-Man-(1-&gt;6)]-alpha-D-Man-(1-&gt;6)]-beta-D-Man-(1-&gt;4)-beta-D-GlcNAc-(1-&gt;4)-alpha-D-GlcNAc-diphospho-di-trans,poly-cis-dolichol + a di-trans,poly-cis-dolichyl phosphate + H(+). Its pathway is protein modification; protein glycosylation. Its function is as follows. Dolichyl pyrophosphate Glc1Man9GlcNAc2 alpha-1,3-glucosyltransferase that operates in the biosynthetic pathway of dolichol-linked oligosaccharides, the glycan precursors employed in protein asparagine (N)-glycosylation. The assembly of dolichol-linked oligosaccharides begins on the cytosolic side of the endoplasmic reticulum membrane and finishes in its lumen. The sequential addition of sugars to dolichol pyrophosphate produces dolichol-linked oligosaccharides containing fourteen sugars, including two GlcNAcs, nine mannoses and three glucoses. Once assembled, the oligosaccharide is transferred from the lipid to nascent proteins by oligosaccharyltransferases. In the lumen of the endoplasmic reticulum, adds the second glucose residue from dolichyl phosphate glucose (Dol-P-Glc) onto the lipid-linked oligosaccharide intermediate Glc(1)Man(9)GlcNAc(2)-PP-Dol to produce Glc(2)Man(9)GlcNAc(2)-PP-Dol. In Caenorhabditis elegans, this protein is Dolichyl pyrophosphate Glc1Man9GlcNAc2 alpha-1,3-glucosyltransferase.